The primary structure comprises 135 residues: NNCPPDWLPMNGLCYKIFDELKAWEDAERFCRKYKPGCHLASFHQYGESLEIAEYISDYHKGQAEVWIGLWDKKKDFSWEWTDRSCTDYLTWDKNQPDHYQNKEFCVELVSLTGYRLWNDQVCGSKNAFLCQCKF.

Cystine bridges form between Cys3-Cys14, Cys31-Cys131, Cys38-Cys133, and Cys106-Cys123. The region spanning 10–132 (MNGLCYKIFD…CGSKNAFLCQ (123 aa)) is the C-type lectin domain. 5 residues coordinate Ca(2+): Gln96, Asp98, Glu104, Asn119, and Asp120. Positions 96–98 (QPD) match the Galactose-binding motif.

The protein belongs to the true venom lectin family. As to quaternary structure, homodimer; disulfide-linked. Expressed by the venom gland.

The protein localises to the secreted. Functionally, galactose-binding lectin which recognizes specific carbohydrate structures and agglutinates a variety of animal cells by binding to cell-surface glycoproteins and glycolipids. This is a calcium-dependent lectin. Shows high hemagglutinating activity (MHC is 0.25 ug/ml on rabbit erythrocytes). This is C-type lectin PAL from Bitis arietans (African puff adder).